A 239-amino-acid chain; its full sequence is MMSCLVPTRFTLTLNTACLLTSTWGFVRATSVVLPPSLSKAGHKQFLTIISIIATIINNAVNISNYYIQRNNKMNLETKKKSDFISRHVTLPVSLVLESIVATVYWPLRLFFVNLIMHGVESTAKTPFPMTVDMAIHLYPILYLLADHYLSGSGTKFKLSNKHAWLIVTSLAFSYFQYLAFLIDAGQGQAYPYPFLDVNEPYKSIIFVVVATITWAYYVFYQKFPPKYIKKSAKKGDKN.

At M1–T11 the chain is on the cytoplasmic side. A helical membrane pass occupies residues L12–S31. Residues V32–Q45 are Lumenal-facing. Residues F46–Y66 form a helical membrane-spanning segment. Over Y67–S99 the chain is Cytoplasmic. A helical membrane pass occupies residues I100–V120. At E121–K125 the chain is on the lumenal side. A helical transmembrane segment spans residues T126 to A146. At D147–K162 the chain is on the cytoplasmic side. A helical membrane pass occupies residues H163–I183. Residues D184–S204 lie on the Lumenal side of the membrane. Residues I205–P225 form a helical membrane-spanning segment. Topologically, residues P226–N239 are cytoplasmic.

Belongs to the UPF0641 family.

It is found in the endoplasmic reticulum membrane. The protein is UPF0641 membrane protein YHR140W of Saccharomyces cerevisiae (strain ATCC 204508 / S288c) (Baker's yeast).